A 351-amino-acid chain; its full sequence is Mediator of RNA polymerase II transcription subunit 18 (351 aa).

Residues 153–231 (GNGDPIDIDT…LPQSLSNGVS (79 aa)) form a disordered region. The segment covering 163–204 (NNDKQGDNNTDKPKQEHDGKLPEAIDEDIIKNGDEKKTTHDD) has biased composition (basic and acidic residues). Residues 205 to 216 (NDSDIMEIDEPN) show a composition bias toward acidic residues. Polar residues predominate over residues 217–231 (PETQTLPQSLSNGVS).

Belongs to the Mediator complex subunit 18 family. As to quaternary structure, component of the Mediator complex.

It localises to the nucleus. Its function is as follows. Component of the Mediator complex, a coactivator involved in the regulated transcription of nearly all RNA polymerase II-dependent genes. Mediator functions as a bridge to convey information from gene-specific regulatory proteins to the basal RNA polymerase II transcription machinery. Mediator is recruited to promoters by direct interactions with regulatory proteins and serves as a scaffold for the assembly of a functional preinitiation complex with RNA polymerase II and the general transcription factors. The chain is Mediator of RNA polymerase II transcription subunit 18 (SRB5) from Candida albicans (strain SC5314 / ATCC MYA-2876) (Yeast).